We begin with the raw amino-acid sequence, 359 residues long: N6-succino-2-amino-2'-deoxyadenylate synthase (359 aa).

The Proton acceptor role is filled by S23. Residues S23, T24, G25, K26, and G27 each coordinate ATP. DGMP is bound at residue S23. S23 contacts Mg(2+). DGMP is bound at residue N49. The ATP site is built by G51, H52, and T53. Position 51 (G51) interacts with Mg(2+). DGMP-binding residues include S131, T132, and R146. An ATP-binding site is contributed by Q190. Residue T205 coordinates dGMP. T274 provides a ligand contact to Mg(2+). Positions 274, 275, and 280 each coordinate L-aspartate. N305 and Q308 together coordinate ATP.

This sequence belongs to the Caudovirales PurZ family. The cofactor is Mg(2+).

It catalyses the reaction dGMP + L-aspartate + ATP = (2S)-2-amino-2'-deoxyadenylo-succinate + ADP + phosphate + 2 H(+). Its pathway is purine metabolism. Functionally, involved in the synthesis of the atypical nucleotide dZTP (2-amino-2'-deoxyadenosine-5'-triphosphate). Catalyzes the condensation of aspartate with deoxyguanylate into dSMP (N6-succino-2-amino-2'-deoxyadenylate), which undergoes defumarylation and phosphorylation respectively by host PurB and guanylate/nucleoside diphosphate kinases to give dZTP. dZTP is integrated into the viral genome instead of adenine by the viral DNA polymerase. This Z-base probably completely replaces adenosine and forms a triple bond to the opposite T-base. The resulting non-standard viral DNA is called Z-genome. The chemically modified DNA is probably harder for the host bacteria to digest with nucleases or restriction enzymes. This Cyanophage S-2L (Cyanobacteria phage S-2L) protein is N6-succino-2-amino-2'-deoxyadenylate synthase.